The primary structure comprises 226 residues: Cobalt transport protein CbiM 2 (226 aa).

The next 6 membrane-spanning stretches (helical) occupy residues 6-26 (GFLP…VVAY), 43-63 (MLLG…MPSV), 75-95 (LGAI…VLLF), 107-127 (TLGA…AAVF), 135-155 (FPFG…TYVT), and 181-201 (VFAL…VVVM).

The protein belongs to the CbiM family. In terms of assembly, forms an energy-coupling factor (ECF) transporter complex composed of an ATP-binding protein (A component, CbiO), a transmembrane protein (T component, CbiQ) and 2 possible substrate-capture proteins (S components, CbiM and CbiN) of unknown stoichimetry.

The protein localises to the cell inner membrane. It participates in cofactor biosynthesis; adenosylcobalamin biosynthesis. In terms of biological role, part of the energy-coupling factor (ECF) transporter complex CbiMNOQ involved in cobalt import. This chain is Cobalt transport protein CbiM 2, found in Pelobacter propionicus (strain DSM 2379 / NBRC 103807 / OttBd1).